Consider the following 296-residue polypeptide: Ribosomal RNA small subunit methyltransferase A (296 aa).

S-adenosyl-L-methionine is bound by residues Asn-30, Leu-32, Gly-57, Glu-78, Asp-103, and Asn-128.

Belongs to the class I-like SAM-binding methyltransferase superfamily. rRNA adenine N(6)-methyltransferase family. RsmA subfamily.

It is found in the cytoplasm. It carries out the reaction adenosine(1518)/adenosine(1519) in 16S rRNA + 4 S-adenosyl-L-methionine = N(6)-dimethyladenosine(1518)/N(6)-dimethyladenosine(1519) in 16S rRNA + 4 S-adenosyl-L-homocysteine + 4 H(+). Specifically dimethylates two adjacent adenosines (A1518 and A1519) in the loop of a conserved hairpin near the 3'-end of 16S rRNA in the 30S particle. May play a critical role in biogenesis of 30S subunits. This chain is Ribosomal RNA small subunit methyltransferase A, found in Macrococcus caseolyticus (strain JCSC5402) (Macrococcoides caseolyticum).